The following is a 727-amino-acid chain: Probable glutamate carboxypeptidase ARB_02390 (727 aa).

A signal peptide spans 1 to 18 (MIVKSLSLLALAAATVEG). Residues Asn60 and Asn80 are each glycosylated (N-linked (GlcNAc...) asparagine). Residues 158–296 (ATAEYVYVGR…ISQLDAQPIL (139 aa)) form the PA domain. Arg197 contacts substrate. N-linked (GlcNAc...) asparagine glycosylation occurs at Asn223. The disordered stretch occupies residues 255–279 (FPGDPTTPGYPSRPDSPRKDKSPVV). Ca(2+) contacts are provided by Thr261 and Tyr264. Positions 266 to 565 (SRPDSPRKDK…QFLGLLGYHL (300 aa)) are NAALADase. 3 N-linked (GlcNAc...) asparagine glycosylation sites follow: Asn310, Asn319, and Asn353. His366 is a binding site for Zn(2+). The active-site For NAALADase activity is the Glu414. Residue Glu415 coordinates Zn(2+). Ca(2+)-binding residues include Glu423 and Glu426. Asp443 contributes to the Zn(2+) binding site. Residues 516–518 (TGA) and Tyr530 contribute to the substrate site. Residue His531 coordinates Zn(2+). Ser604 functions as the Charge relay system in the catalytic mechanism. Asn614 is a glycosylation site (N-linked (GlcNAc...) asparagine). The active-site Charge relay system is the His665. 675–676 (GY) contacts substrate. Asn692 carries an N-linked (GlcNAc...) asparagine glycan.

It belongs to the peptidase M28 family. M28B subfamily. Zn(2+) is required as a cofactor.

The protein localises to the secreted. It carries out the reaction Release of an unsubstituted, C-terminal glutamyl residue, typically from Ac-Asp-Glu or folylpoly-gamma-glutamates.. Its function is as follows. Has both folate hydrolase and N-acetylated-alpha-linked-acidic dipeptidase (NAALADase) activity. Also exhibits a dipeptidyl-peptidase IV type activity. In Arthroderma benhamiae (strain ATCC MYA-4681 / CBS 112371) (Trichophyton mentagrophytes), this protein is Probable glutamate carboxypeptidase ARB_02390.